A 492-amino-acid polypeptide reads, in one-letter code: Dynein regulatory complex subunit 2 (492 aa).

Coiled coils occupy residues 16 to 95 (LTEE…FERV), 256 to 318 (VQSA…AAQA), and 373 to 401 (LSEE…HDYS).

The protein belongs to the DRC2 family. As to quaternary structure, component of the nexin-dynein regulatory complex (N-DRC).

Its subcellular location is the cytoplasm. The protein localises to the cytoskeleton. It localises to the flagellum basal body. It is found in the cell projection. The protein resides in the cilium. Its subcellular location is the flagellum. The protein localises to the flagellum axoneme. Functionally, component of the nexin-dynein regulatory complex (N-DRC), a key regulator of ciliary/flagellar motility which maintains the alignment and integrity of the distal axoneme and regulates microtubule sliding in motile axonemes. Plays a critical role in the assembly of N-DRC and also stabilizes the assembly of multiple inner dynein arms and radial spokes. Coassembles with DRC1 to form a central scaffold needed for assembly of the N-DRC and its attachment to the outer doublet microtubules. In Danio rerio (Zebrafish), this protein is Dynein regulatory complex subunit 2 (ccdc65).